Reading from the N-terminus, the 196-residue chain is MGFIIGFLLSVFGYLLGSILFAKIVASYKGIDITSVGSKSAGATNVTRTLGKKYGALVFLLDAFKGFLIAILDRFYIDPSSLWFGIVMVSPVIGHIYSYRSDFKGGKGVATAFGVVFGISPLLALKMFLVWAFVFYLFRYVSLASITSVLVGYFLFLEGDFSTSQKLGATMIAFLILYKHKDNVFRLLRKEEHKFK.

The next 5 membrane-spanning stretches (helical) occupy residues 1–21 (MGFI…SILF), 53–73 (KYGA…AILD), 76–96 (YIDP…IGHI), 115–135 (VVFG…AFVF), and 141–161 (VSLA…EGDF).

This sequence belongs to the PlsY family. As to quaternary structure, probably interacts with PlsX.

The protein localises to the cell inner membrane. The catalysed reaction is an acyl phosphate + sn-glycerol 3-phosphate = a 1-acyl-sn-glycero-3-phosphate + phosphate. It functions in the pathway lipid metabolism; phospholipid metabolism. Its function is as follows. Catalyzes the transfer of an acyl group from acyl-phosphate (acyl-PO(4)) to glycerol-3-phosphate (G3P) to form lysophosphatidic acid (LPA). This enzyme utilizes acyl-phosphate as fatty acyl donor, but not acyl-CoA or acyl-ACP. This chain is Glycerol-3-phosphate acyltransferase, found in Hydrogenobaculum sp. (strain Y04AAS1).